The chain runs to 113 residues: Large ribosomal subunit protein uL22 (113 aa).

This sequence belongs to the universal ribosomal protein uL22 family. Part of the 50S ribosomal subunit.

Functionally, this protein binds specifically to 23S rRNA; its binding is stimulated by other ribosomal proteins, e.g. L4, L17, and L20. It is important during the early stages of 50S assembly. It makes multiple contacts with different domains of the 23S rRNA in the assembled 50S subunit and ribosome. The globular domain of the protein is located near the polypeptide exit tunnel on the outside of the subunit, while an extended beta-hairpin is found that lines the wall of the exit tunnel in the center of the 70S ribosome. This Roseiflexus sp. (strain RS-1) protein is Large ribosomal subunit protein uL22.